The sequence spans 329 residues: DNA-directed RNA polymerase subunit alpha (329 aa).

An alpha N-terminal domain (alpha-NTD) region spans residues 1 to 235; that stretch reads MQGSVTEFLK…EQLEAFVDLR (235 aa). Positions 249–329 are alpha C-terminal domain (alpha-CTD); the sequence is FDPILLRPVD…NWPPASIADE (81 aa).

It belongs to the RNA polymerase alpha chain family. In terms of assembly, homodimer. The RNAP catalytic core consists of 2 alpha, 1 beta, 1 beta' and 1 omega subunit. When a sigma factor is associated with the core the holoenzyme is formed, which can initiate transcription.

It carries out the reaction RNA(n) + a ribonucleoside 5'-triphosphate = RNA(n+1) + diphosphate. DNA-dependent RNA polymerase catalyzes the transcription of DNA into RNA using the four ribonucleoside triphosphates as substrates. The protein is DNA-directed RNA polymerase subunit alpha of Shigella dysenteriae serotype 1 (strain Sd197).